The chain runs to 127 residues: Fluoride-specific ion channel FluC (127 aa).

4 helical membrane passes run 6–26 (LAISLGASAGAVSRWLLGLGF), 37–57 (TLLANLLGGYLIGIAVTFFAA), 67–87 (LLVITGFLGGLTTFSTFSAEV), and 96–116 (LLWAGGAIAVHVIGSLVMTLL). The Na(+) site is built by G75 and T78.

This sequence belongs to the fluoride channel Fluc/FEX (TC 1.A.43) family.

It is found in the cell inner membrane. It carries out the reaction fluoride(in) = fluoride(out). Its activity is regulated as follows. Na(+) is not transported, but it plays an essential structural role and its presence is essential for fluoride channel function. In terms of biological role, fluoride-specific ion channel. Important for reducing fluoride concentration in the cell, thus reducing its toxicity. This chain is Fluoride-specific ion channel FluC, found in Tolumonas auensis (strain DSM 9187 / NBRC 110442 / TA 4).